We begin with the raw amino-acid sequence, 206 residues long: LexA repressor (206 aa).

Residues 28-48 (RAEIATRLGFKSANAAEEHLK) constitute a DNA-binding region (H-T-H motif). Residues Ser123 and Lys160 each act as for autocatalytic cleavage activity in the active site.

This sequence belongs to the peptidase S24 family. Homodimer.

The catalysed reaction is Hydrolysis of Ala-|-Gly bond in repressor LexA.. In terms of biological role, represses a number of genes involved in the response to DNA damage (SOS response), including recA and lexA. In the presence of single-stranded DNA, RecA interacts with LexA causing an autocatalytic cleavage which disrupts the DNA-binding part of LexA, leading to derepression of the SOS regulon and eventually DNA repair. The chain is LexA repressor from Shewanella sp. (strain MR-7).